The following is a 388-amino-acid chain: Processive diacylglycerol beta-glucosyltransferase (388 aa).

The protein belongs to the glycosyltransferase 28 family. UgtP subfamily.

Its subcellular location is the cell membrane. It catalyses the reaction a 1,2-diacyl-3-O-(beta-D-glucopyranosyl)-sn-glycerol + UDP-alpha-D-glucose = a 1,2-diacyl-3-O-(beta-D-Glc-(1-&gt;6)-beta-D-Glc)-sn-glycerol + UDP + H(+). It carries out the reaction a 1,2-diacyl-3-O-(beta-D-Glc-(1-&gt;6)-beta-D-Glc)-sn-glycerol + UDP-alpha-D-glucose = a 1,2-diacyl-3-O-(beta-D-Glc-(1-&gt;6)-beta-D-Glc-(1-&gt;6)-beta-D-Glc)-sn-glycerol + UDP + H(+). The catalysed reaction is a 1,2-diacyl-sn-glycerol + UDP-alpha-D-glucose = a 1,2-diacyl-3-O-(beta-D-glucopyranosyl)-sn-glycerol + UDP + H(+). It participates in glycolipid metabolism; diglucosyl-diacylglycerol biosynthesis. Functionally, processive glucosyltransferase involved in the biosynthesis of both the bilayer- and non-bilayer-forming membrane glucolipids. Is able to successively transfer up to three glucosyl residues to diacylglycerol (DAG), thereby catalyzing the formation of beta-monoglucosyl-DAG (3-O-(beta-D-glucopyranosyl)-1,2-diacyl-sn-glycerol), beta-diglucosyl-DAG (3-O-(beta-D-glucopyranosyl-beta-(1-&gt;6)-D-glucopyranosyl)-1,2-diacyl-sn-glycerol) and beta-triglucosyl-DAG (3-O-(beta-D-glucopyranosyl-beta-(1-&gt;6)-D-glucopyranosyl-beta-(1-&gt;6)-D-glucopyranosyl)-1,2-diacyl-sn-glycerol). Beta-diglucosyl-DAG is the predominant glycolipid found in Bacillales and is also used as a membrane anchor for lipoteichoic acid (LTA). This is Processive diacylglycerol beta-glucosyltransferase from Bacillus anthracis (strain A0248).